The sequence spans 502 residues: MKIGFDHEKYLEEQSKYILERVDSYDKLYLEFGGKLFNDRHAMRVLPGFDENAKIKLLHKLKEKVEVVICVYAGDIERNKIRGDFGITYDMDVLRLIDDLRTYELEVNSVVITRYNGQPATTVFINKLERRGIKVYKHKSTKGYPTDVDTIVSEEGYGQNPYIETTKPIVVVTAPGPGSGKLATCLSQLYHESKRGNAAGYSKFETFPVWNVPLKHPLNIAYEAATVDLKDVNMLDSFHMDAYNKVTVNYNRDIESFPVLKRIIEKITCKESIYKSPTDMGVNRVGFGIVDDDAVKEASKQEIIRRYFKTGCDYKKGYADKETFDRSKLIMEEVDLKETDRKVVLPAREKSAKLKMATDENEICPVVALELSDGKILTGKSSDLMDGAAAVIINAIKYLANISDDIYLISPVILEPIMNLKSKTFNEKNISLNCEEVLTALSISAATNPTAQVAMEKLPLLRGCQAHATTILSRADDTTLGKLGIDVTCDPNYPSESLYYNN.

The protein belongs to the UPF0371 family.

The polypeptide is UPF0371 protein CLL_A2797 (Clostridium botulinum (strain Eklund 17B / Type B)).